A 382-amino-acid chain; its full sequence is Protein phosphatase 1A (382 aa).

A lipid anchor (N-myristoyl glycine) is attached at G2. The PPM-type phosphatase domain maps to 23–291 (RYGLSSMQGW…DNMSVILICF (269 aa)). Mn(2+) contacts are provided by D60, G61, D239, and D282. 2 positions are modified to phosphoserine: S375 and S377.

Belongs to the PP2C family. As to quaternary structure, monomer. Interacts with SMAD2; the interaction dephosphorylates SMAD2 in its C-terminal SXS motif resulting in disruption of the SMAD2/SMAD4 complex, SMAD2 nuclear export and termination of the TGF-beta-mediated signaling. Interacts with SMAD2; the interaction dephosphorylates SMAD2 in its C-terminal SXS motif resulting in disruption of the SMAD2/SMAD4 complex, SMAD2 nuclear export and termination of the TGF-beta-mediated signaling. Interacts with the phosphorylated form of IKBKB/IKKB. The cofactor is Mg(2+). Requires Mn(2+) as cofactor. N-myristoylation is essential for the recognition of its substrates for dephosphorylation.

It localises to the nucleus. The protein localises to the cytoplasm. It is found in the cytosol. The protein resides in the membrane. The enzyme catalyses O-phospho-L-seryl-[protein] + H2O = L-seryl-[protein] + phosphate. It catalyses the reaction O-phospho-L-threonyl-[protein] + H2O = L-threonyl-[protein] + phosphate. Enzyme with a broad specificity. Negatively regulates TGF-beta signaling through dephosphorylating SMAD2 and SMAD3, resulting in their dissociation from SMAD4, nuclear export of the SMADs and termination of the TGF-beta-mediated signaling. Dephosphorylates PRKAA1 and PRKAA2. Plays an important role in the termination of TNF-alpha-mediated NF-kappa-B activation through dephosphorylating and inactivating IKBKB/IKKB. This chain is Protein phosphatase 1A (Ppm1a), found in Mus musculus (Mouse).